The sequence spans 341 residues: Limbic system-associated membrane protein (341 aa).

The signal sequence occupies residues 1–28 (MVGRVQPDRKQLPLVLLRLLCLLPTGLP). 3 consecutive Ig-like domains span residues 29 to 122 (VRSV…PKTS), 132 to 214 (PKIS…VKVT), and 219 to 304 (PTIT…ASLV). Asparagine 40 and asparagine 66 each carry an N-linked (GlcNAc...) asparagine glycan. Cysteine 53 and cysteine 111 are joined by a disulfide. Tyrosine 94 carries the post-translational modification Phosphotyrosine. Asparagine 136 and asparagine 148 each carry an N-linked (GlcNAc...) asparagine glycan. Cystine bridges form between cysteine 153-cysteine 197 and cysteine 239-cysteine 290. Residues asparagine 279, asparagine 287, and asparagine 300 are each glycosylated (N-linked (GlcNAc...) asparagine).

Belongs to the immunoglobulin superfamily. IgLON family.

The protein localises to the cell membrane. In terms of biological role, mediates selective neuronal growth and axon targeting. Contributes to the guidance of developing axons and remodeling of mature circuits in the limbic system. Essential for normal growth of the hippocampal mossy fiber projection. The polypeptide is Limbic system-associated membrane protein (Lsamp) (Mus musculus (Mouse)).